We begin with the raw amino-acid sequence, 206 residues long: Pyrrolidone-carboxylate peptidase (206 aa).

Active-site residues include Glu-78, Cys-141, and His-165.

Belongs to the peptidase C15 family. In terms of assembly, homotetramer.

The protein localises to the cytoplasm. It carries out the reaction Release of an N-terminal pyroglutamyl group from a polypeptide, the second amino acid generally not being Pro.. Its function is as follows. Removes 5-oxoproline from various penultimate amino acid residues except L-proline. The polypeptide is Pyrrolidone-carboxylate peptidase (Thermococcus kodakarensis (strain ATCC BAA-918 / JCM 12380 / KOD1) (Pyrococcus kodakaraensis (strain KOD1))).